A 286-amino-acid polypeptide reads, in one-letter code: Pantothenate synthetase (286 aa).

31–38 (MGALHEGH) lines the ATP pocket. The active-site Proton donor is histidine 38. Residue glutamine 65 participates in (R)-pantoate binding. Residue glutamine 65 coordinates beta-alanine. 153-156 (GEKD) contributes to the ATP binding site. Glutamine 159 serves as a coordination point for (R)-pantoate. An ATP-binding site is contributed by 190 to 193 (LSSR).

This sequence belongs to the pantothenate synthetase family. As to quaternary structure, homodimer.

It is found in the cytoplasm. It carries out the reaction (R)-pantoate + beta-alanine + ATP = (R)-pantothenate + AMP + diphosphate + H(+). It participates in cofactor biosynthesis; (R)-pantothenate biosynthesis; (R)-pantothenate from (R)-pantoate and beta-alanine: step 1/1. Catalyzes the condensation of pantoate with beta-alanine in an ATP-dependent reaction via a pantoyl-adenylate intermediate. This is Pantothenate synthetase from Corynebacterium diphtheriae (strain ATCC 700971 / NCTC 13129 / Biotype gravis).